The sequence spans 381 residues: MASPPACPSEEDESLKGCELYVQLHGIQQVLKDCIVHLCISKPERPMKFLREHFEKLEKEENRQILARQKSNSQSDSHDEEVSPTPPNPVVKARRRRGGVSAEVYTEEDAVSYVRKVIPKDYKTMTALAKAISKNVLFAHLDDNERSDIFDAMFPVTHIAGETVIQQGNEGDNFYVVDQGEVDVYVNGEWVTNISEGGSFGELALIYGTPRAATVKAKTDLKLWGIDRDSYRRILMGSTLRKRKMYEEFLSKVSILESLEKWERLTVADALEPVQFEDGEKIVVQGEPGDDFYIITEGTASVLQRRSPNEEYVEVGRLGPSDYFGEIALLLNRPRAATVVARGPLKCVKLDRPRFERVLGPCSEILKRNIQRYNSFISLTV.

Positions 2 to 136 (ASPPACPSEE…ALAKAISKNV (135 aa)) are dimerization and phosphorylation. Serine 3 is subject to Phosphoserine. Position 21 is a 3'-nitrotyrosine (tyrosine 21). The disordered stretch occupies residues 67 to 98 (ARQKSNSQSDSHDEEVSPTPPNPVVKARRRRG). Phosphoserine is present on residues serine 77 and serine 83. Phosphothreonine is present on threonine 85. Residues 96 to 100 (RRGGV) carry the Pseudophosphorylation motif motif. Arginine 97 is subject to Omega-N-methylarginine. 3',5'-cyclic AMP contacts are provided by residues 137-254 (LFAH…SKVS), glutamate 202, arginine 211, 255-381 (ILES…SLTV), glutamate 326, and arginine 335.

The protein belongs to the cAMP-dependent kinase regulatory chain family. In terms of assembly, the inactive holoenzyme is composed of two regulatory chains and two catalytic chains. Activation by cAMP releases the two active catalytic monomers and the regulatory dimer. Interacts with PRKX; regulates this cAMP-dependent protein kinase. Interacts with C2orf88/smAKAP; this interaction may target PRKAR1B to the plasma membrane. Post-translationally, the pseudophosphorylation site binds to the substrate-binding region of the catalytic chain, resulting in the inhibition of its activity. Four types of regulatory chains are found: I-alpha, I-beta, II-alpha, and II-beta. Their expression varies among tissues and is in some cases constitutive and in others inducible.

It localises to the cell membrane. Its function is as follows. Regulatory subunit of the cAMP-dependent protein kinases involved in cAMP signaling in cells. The sequence is that of cAMP-dependent protein kinase type I-beta regulatory subunit (PRKAR1B) from Homo sapiens (Human).